Here is a 436-residue protein sequence, read N- to C-terminus: ABC transporter permease YtrF (436 aa).

The signal sequence occupies residues 1-31 (MRFKDQVHFIRRNMKKNRLRVFMTILATTMA). Cys-32 carries the N-palmitoyl cysteine lipid modification. Cys-32 is lipidated: S-diacylglycerol cysteine. The stretch at 115 to 165 (NMNDELKANMELEKGRVAKSENEIVVGYDFAKRLLTKKESEEYNKKIEEAK) forms a coiled coil. Helical transmembrane passes span 293 to 313 (FKIG…IGIF), 350 to 370 (YIGI…SYLV), and 396 to 416 (IPAS…VISG).

This sequence belongs to the ABC-4 integral membrane protein family. In terms of assembly, the complex is composed of 2 ATP-binding proteins (YtrB and YtrE), 2 transmembrane proteins (YtrC and YtrD) and a solute-binding protein (YtrF).

The protein resides in the cell membrane. Part of the ABC transporter complex YtrBCDEF that plays a role in acetoin utilization during stationary phase and sporulation. The sequence is that of ABC transporter permease YtrF (ytrF) from Bacillus subtilis (strain 168).